The sequence spans 318 residues: Aldo-keto reductase family 1 member C21 (318 aa).

20–24 (GFGTA) provides a ligand contact to NADP(+). Residue K31 participates in substrate binding. D50 is a binding site for NADP(+). The active-site Proton donor is Y55. Substrate is bound at residue H117. Residues 166–167 (SN), Q190, 216–224 (YGVLGTQRY), and 270–280 (TSLKEERIKEN) contribute to the NADP(+) site.

Belongs to the aldo/keto reductase family. In terms of assembly, monomer.

It is found in the cytoplasm. It catalyses the reaction androsterone + NADP(+) = 5alpha-androstan-3,17-dione + NADPH + H(+). It carries out the reaction androsterone + NAD(+) = 5alpha-androstan-3,17-dione + NADH + H(+). NADP-dependent 17-alpha-hydroxysteroid dehydrogenase that converts 5-alpha-androstane-3,17-dione into androsterone. Has lower 3-alpha-hydroxysteroid dehydrogenase activity. Has broad substrate specificity and acts on various 17-alpha-hydroxysteroids, 17-ketosteroids, 3-alpha hydroxysteroids and 3-ketosteroids. Reduction of keto groups is strictly stereoselective. Reduction of 17-ketosteroids yields only 17-alpha-hydroxysteroids. Likewise, reduction of 3-ketosteroids yields only 3-alpha-hydroxysteroids. This is Aldo-keto reductase family 1 member C21 (Akr1c21) from Rattus norvegicus (Rat).